The chain runs to 585 residues: Proline--tRNA ligase (585 aa).

Belongs to the class-II aminoacyl-tRNA synthetase family. ProS type 1 subfamily. In terms of assembly, homodimer.

The protein resides in the cytoplasm. It catalyses the reaction tRNA(Pro) + L-proline + ATP = L-prolyl-tRNA(Pro) + AMP + diphosphate. Catalyzes the attachment of proline to tRNA(Pro) in a two-step reaction: proline is first activated by ATP to form Pro-AMP and then transferred to the acceptor end of tRNA(Pro). As ProRS can inadvertently accommodate and process non-cognate amino acids such as alanine and cysteine, to avoid such errors it has two additional distinct editing activities against alanine. One activity is designated as 'pretransfer' editing and involves the tRNA(Pro)-independent hydrolysis of activated Ala-AMP. The other activity is designated 'posttransfer' editing and involves deacylation of mischarged Ala-tRNA(Pro). The misacylated Cys-tRNA(Pro) is not edited by ProRS. The protein is Proline--tRNA ligase of Cutibacterium acnes (strain DSM 16379 / KPA171202) (Propionibacterium acnes).